A 376-amino-acid polypeptide reads, in one-letter code: Phytanoyl-CoA hydroxylase-interacting protein-like (376 aa).

Positions 52–161 constitute a Fibronectin type-III domain; that stretch reads VPHNIKISNI…EIIEFCTADY (110 aa).

This sequence belongs to the PHYHIP family.

In terms of biological role, may play a role in the development of the central system. The polypeptide is Phytanoyl-CoA hydroxylase-interacting protein-like (phyhipl) (Xenopus tropicalis (Western clawed frog)).